The sequence spans 275 residues: Glutamate racemase (275 aa).

Residues 22–23 (DS) and 54–55 (YG) contribute to the substrate site. The active-site Proton donor/acceptor is C85. Residue 86–87 (NT) coordinates substrate. C196 acts as the Proton donor/acceptor in catalysis. 197–198 (TH) provides a ligand contact to substrate.

This sequence belongs to the aspartate/glutamate racemases family.

The catalysed reaction is L-glutamate = D-glutamate. It functions in the pathway cell wall biogenesis; peptidoglycan biosynthesis. Functionally, provides the (R)-glutamate required for cell wall biosynthesis. This chain is Glutamate racemase, found in Pseudomonas syringae pv. tomato (strain ATCC BAA-871 / DC3000).